The primary structure comprises 267 residues: Tryptophan synthase alpha chain (267 aa).

Catalysis depends on proton acceptor residues E47 and D58.

The protein belongs to the TrpA family. In terms of assembly, tetramer of two alpha and two beta chains.

The catalysed reaction is (1S,2R)-1-C-(indol-3-yl)glycerol 3-phosphate + L-serine = D-glyceraldehyde 3-phosphate + L-tryptophan + H2O. Its pathway is amino-acid biosynthesis; L-tryptophan biosynthesis; L-tryptophan from chorismate: step 5/5. Functionally, the alpha subunit is responsible for the aldol cleavage of indoleglycerol phosphate to indole and glyceraldehyde 3-phosphate. The protein is Tryptophan synthase alpha chain of Chlorobaculum tepidum (strain ATCC 49652 / DSM 12025 / NBRC 103806 / TLS) (Chlorobium tepidum).